The following is a 428-amino-acid chain: Glial fibrillary acidic protein (428 aa).

Residues 1–68 (MERRRVTSAT…KETRASERAE (68 aa)) form a head region. Thr-7 carries the phosphothreonine; by AURKB and ROCK1 modification. Arg-12 is modified (omega-N-methylarginine). The residue at position 13 (Ser-13) is a Phosphoserine; by AURKB and ROCK1. Citrulline is present on residues Arg-26 and Arg-32. At Ser-34 the chain carries Phosphoserine; by AURKB and ROCK1. The region spanning 65–373 (ERAEMMELND…KLLEGEENRI (309 aa)) is the IF rod domain. The segment at 69–100 (MMELNDRFASYIEKVRFLEQQNKALAAELNQL) is coil 1A. Ser-78 carries the phosphoserine modification. The tract at residues 101–111 (RAKEPTKLADV) is linker 1. A phosphothreonine mark is found at Thr-106 and Thr-146. Positions 112–210 (YQAELRELRL…EEEVRELQEQ (99 aa)) are coil 1B. The segment at 211 to 226 (LAQQQVHVEMDVAKPD) is linker 12. A coil 2A region spans residues 227–248 (LTAALREIRTQYEAVASSNMHE). The tract at residues 249–252 (AEEW) is linker 2. The segment at 253–373 (YRSKFADLND…KLLEGEENRI (121 aa)) is coil 2B. The residue at position 266 (Arg-266) is a Citrulline. A Phosphoserine modification is found at Ser-319. Residues 374-428 (TIPVQTFSNLQIRETSLDTKSVSEGHLKRNIVVKTVEMRDGEVIKESKQEHKDVM) form a tail region. Residue Thr-379 is modified to Phosphothreonine. Ser-381 is subject to Phosphoserine. Arg-402 and Arg-412 each carry citrulline.

The protein belongs to the intermediate filament family. As to quaternary structure, interacts with SYNM. In terms of processing, phosphorylated by PKN1.

It localises to the cytoplasm. GFAP, a class-III intermediate filament, is a cell-specific marker that, during the development of the central nervous system, distinguishes astrocytes from other glial cells. This chain is Glial fibrillary acidic protein (GFAP), found in Bos taurus (Bovine).